We begin with the raw amino-acid sequence, 292 residues long: ATP synthase gamma chain (292 aa).

It belongs to the ATPase gamma chain family. As to quaternary structure, F-type ATPases have 2 components, CF(1) - the catalytic core - and CF(0) - the membrane proton channel. CF(1) has five subunits: alpha(3), beta(3), gamma(1), delta(1), epsilon(1). CF(0) has three main subunits: a, b and c.

It localises to the cell inner membrane. Produces ATP from ADP in the presence of a proton gradient across the membrane. The gamma chain is believed to be important in regulating ATPase activity and the flow of protons through the CF(0) complex. The protein is ATP synthase gamma chain of Magnetococcus marinus (strain ATCC BAA-1437 / JCM 17883 / MC-1).